We begin with the raw amino-acid sequence, 146 residues long: Protein archease (146 aa).

Asp16, Asp145, and Ile146 together coordinate Ca(2+).

This sequence belongs to the archease family.

Functionally, activates the tRNA-splicing ligase complex by facilitating the enzymatic turnover of catalytic subunit RtcB. Acts by promoting the guanylylation of RtcB, a key intermediate step in tRNA ligation. Can also alter the NTP specificity of RtcB such that ATP, dGTP or ITP is used efficiently. This is Protein archease from Methanosarcina mazei (strain ATCC BAA-159 / DSM 3647 / Goe1 / Go1 / JCM 11833 / OCM 88) (Methanosarcina frisia).